The sequence spans 644 residues: L-aspartate oxidase 2-a, chloroplastic (644 aa).

FAD contacts are provided by residues 94–97 (SGIA), Lys-116, 123–130 (NTNYAQGG), and Asp-294. Arg-369 functions as the Proton donor/acceptor in the catalytic mechanism. Residues Glu-454 and 470 to 471 (SL) contribute to the FAD site.

It belongs to the FAD-dependent oxidoreductase 2 family. NadB subfamily. FAD serves as cofactor.

It localises to the plastid. The protein localises to the chloroplast. It catalyses the reaction L-aspartate + O2 = iminosuccinate + H2O2. It participates in alkaloid biosynthesis; nicotine biosynthesis. Its pathway is cofactor biosynthesis; NAD(+) biosynthesis; iminoaspartate from L-aspartate (oxidase route): step 1/1. Involved in the biosynthesis of pyridine alkaloid natural products, leading mainly to the production of anabasine, anatabine, nicotine and nornicotine, effective deterrents against herbivores with antiparasitic and pesticide properties (neurotoxins); nornicotine serves as the precursor in the synthesis of the carcinogen compound N'-nitrosonornicotine (NNN). Catalyzes the oxidation of L-aspartate to iminoaspartate. The polypeptide is L-aspartate oxidase 2-a, chloroplastic (Nicotiana tabacum (Common tobacco)).